Reading from the N-terminus, the 278-residue chain is Ribosomal RNA small subunit methyltransferase A (278 aa).

Residues Asn-28, Leu-30, Gly-55, Glu-77, Asp-103, and Asn-122 each contribute to the S-adenosyl-L-methionine site.

Belongs to the class I-like SAM-binding methyltransferase superfamily. rRNA adenine N(6)-methyltransferase family. RsmA subfamily.

The protein resides in the cytoplasm. The enzyme catalyses adenosine(1518)/adenosine(1519) in 16S rRNA + 4 S-adenosyl-L-methionine = N(6)-dimethyladenosine(1518)/N(6)-dimethyladenosine(1519) in 16S rRNA + 4 S-adenosyl-L-homocysteine + 4 H(+). In terms of biological role, specifically dimethylates two adjacent adenosines (A1518 and A1519) in the loop of a conserved hairpin near the 3'-end of 16S rRNA in the 30S particle. May play a critical role in biogenesis of 30S subunits. The sequence is that of Ribosomal RNA small subunit methyltransferase A from Cereibacter sphaeroides (strain ATCC 17029 / ATH 2.4.9) (Rhodobacter sphaeroides).